A 577-amino-acid polypeptide reads, in one-letter code: Dihydroxy-acid dehydratase (577 aa).

Residues M1–K10 are compositionally biased toward basic and acidic residues. Residues M1 to R22 are disordered. C56 provides a ligand contact to [2Fe-2S] cluster. D88 lines the Mg(2+) pocket. C129 lines the [2Fe-2S] cluster pocket. Positions 130 and 131 each coordinate Mg(2+). At K131 the chain carries N6-carboxylysine. Residue C201 participates in [2Fe-2S] cluster binding. Position 453 (E453) interacts with Mg(2+). S479 functions as the Proton acceptor in the catalytic mechanism.

Belongs to the IlvD/Edd family. As to quaternary structure, homodimer. [2Fe-2S] cluster is required as a cofactor. Mg(2+) serves as cofactor.

The catalysed reaction is (2R)-2,3-dihydroxy-3-methylbutanoate = 3-methyl-2-oxobutanoate + H2O. The enzyme catalyses (2R,3R)-2,3-dihydroxy-3-methylpentanoate = (S)-3-methyl-2-oxopentanoate + H2O. The protein operates within amino-acid biosynthesis; L-isoleucine biosynthesis; L-isoleucine from 2-oxobutanoate: step 3/4. It functions in the pathway amino-acid biosynthesis; L-valine biosynthesis; L-valine from pyruvate: step 3/4. Functions in the biosynthesis of branched-chain amino acids. Catalyzes the dehydration of (2R,3R)-2,3-dihydroxy-3-methylpentanoate (2,3-dihydroxy-3-methylvalerate) into 2-oxo-3-methylpentanoate (2-oxo-3-methylvalerate) and of (2R)-2,3-dihydroxy-3-methylbutanoate (2,3-dihydroxyisovalerate) into 2-oxo-3-methylbutanoate (2-oxoisovalerate), the penultimate precursor to L-isoleucine and L-valine, respectively. This chain is Dihydroxy-acid dehydratase, found in Dinoroseobacter shibae (strain DSM 16493 / NCIMB 14021 / DFL 12).